The chain runs to 143 residues: Large ribosomal subunit protein uL15 (143 aa).

The tract at residues 1 to 59 is disordered; sequence MELNGIKPSLGAKHAKRRVGRGIGSGLGKTAGRGHKGQKSRAGGYHKVGFEGGQMPMQR. The span at 21–31 shows a compositional bias: gly residues; the sequence is RGIGSGLGKTA.

It belongs to the universal ribosomal protein uL15 family. Part of the 50S ribosomal subunit.

Functionally, binds to the 23S rRNA. This Polaromonas sp. (strain JS666 / ATCC BAA-500) protein is Large ribosomal subunit protein uL15.